A 188-amino-acid chain; its full sequence is Small ribosomal subunit protein uS12m (188 aa).

The transit peptide at 1–63 directs the protein to the mitochondrion; it reads MSGGRWISNL…AAFRLPQSSG (63 aa).

This sequence belongs to the universal ribosomal protein uS12 family.

It localises to the mitochondrion. Functionally, protein S12 is involved in the translation initiation step. The polypeptide is Small ribosomal subunit protein uS12m (RPS12) (Oenothera elata subsp. hookeri (Hooker's evening primrose)).